The sequence spans 87 residues: Scorpine-like peptide Tco 41.46-2 (87 aa).

The first 19 residues, M1–C19, serve as a signal peptide directing secretion. A BetaSPN-type CS-alpha/beta domain is found at Q53 to D87. 3 cysteine pairs are disulfide-bonded: C56/C77, C63/C82, and C67/C84.

Belongs to the long chain scorpion toxin family. Class 1 subfamily. In terms of tissue distribution, expressed by the venom gland.

It localises to the secreted. In terms of biological role, may have antibacterial activity. Its function is as follows. Inhibits voltage-gated potassium channel. Functionally, does not induce hemolytic activity, lactate dehydrogenase (LDH) release from mast cells, mast cell degranulation, and antimicrobial effects. In vivo, injection into mice causes moderate edema formation, but induces very weak or no change in nociceptive sensibility. It also reduces mice locomotion, suggesting an increase in anxiety, but causes no alteration in rearing (standing on hind limbs). The sequence is that of Scorpine-like peptide Tco 41.46-2 from Tityus costatus (Brazilian scorpion).